Here is a 66-residue protein sequence, read N- to C-terminus: Cold shock protein CspD (66 aa).

Residues 4–63 (GKVKWFNNEKGFGFIEVEGGDDVFVHFTAIEGDGYKSLEEGQEVSFEIVEGNRGPQASNV) form the CSD domain.

It localises to the cytoplasm. In Bacillus subtilis (strain 168), this protein is Cold shock protein CspD (cspD).